A 118-amino-acid polypeptide reads, in one-letter code: MKFQPLGERVLVERLEEENKTSSGIIIPDNAKEKPLMGVVKAVSHKISEGCKCVKEGDVIAFGKYKGTEIVLDGTEYMVLELEDILGIVGSGSCCHTGNHDHKHAKEHEACCHDHKKH.

The protein belongs to the GroES chaperonin family. In terms of assembly, heptamer of 7 subunits arranged in a ring. Interacts with the chaperonin GroEL.

The protein resides in the cytoplasm. Functionally, together with the chaperonin GroEL, plays an essential role in assisting protein folding. The GroEL-GroES system forms a nano-cage that allows encapsulation of the non-native substrate proteins and provides a physical environment optimized to promote and accelerate protein folding. GroES binds to the apical surface of the GroEL ring, thereby capping the opening of the GroEL channel. This chain is Co-chaperonin GroES, found in Helicobacter pylori (strain P12).